The chain runs to 380 residues: GATOR1 complex protein NPRL2 (380 aa).

Residues Met1 to Thr133 are interaction with PDPK1. Arg78 contacts GDP. Arg78 carries the asymmetric dimethylarginine modification. Glycyl lysine isopeptide (Lys-Gly) (interchain with G-Cter in ubiquitin) cross-links involve residues Lys158 and Lys357.

Belongs to the NPR2 family. As to quaternary structure, within the GATOR complex, component of the GATOR1 subcomplex, made of DEPDC5, NPRL2 and NPRL3. GATOR1 mediates the strong interaction of the GATOR complex with small GTPases Rag (RagA/RRAGA, RagB/RRAGB, RagC/RRAGC and/or RagD/RRAGD) heterodimers. GATOR1 interacts with GPR155/LYCHOS; interaction takes place in presence of cholesterol and prevents interaction between GATOR1 and KICSTOR. Interacts with PDPK1. In the presence of abundant amino acids, ubiquitinated at Lys-158 and Lys-357 via 'Lys-6'-linked ubiquitination by the WDR24 component of the GATOR2 complex, thereby inhibiting the GATOR1 complex and promoting mTORC1 activation. In terms of processing, asymmetric dimethylation at Arg-78 by PRMT1 inhibits the GTPase activator activity of the GATOR1 complex and consequently inducing timely mTORC1 activation under methionine-sufficient conditions.

It localises to the lysosome membrane. Catalytic component of the GATOR1 complex, a multiprotein complex that functions as an inhibitor of the amino acid-sensing branch of the mTORC1 pathway. In response to amino acid depletion, the GATOR1 complex has GTPase activating protein (GAP) activity and strongly increases GTP hydrolysis by RagA/RRAGA (or RagB/RRAGB) within heterodimeric Rag complexes, thereby turning them into their inactive GDP-bound form, releasing mTORC1 from lysosomal surface and inhibiting mTORC1 signaling. In the presence of abundant amino acids, the GATOR1 complex is ubiquitinated and inhibited by GATOR2. Within the GATOR1 complex, NPRL2 constitutes the catalytic subunit that mediates the GTPase activator activity and under methionine-sufficient conditions, the GTPase activator activity is inhibited by PRMT1 through methylation and consequently inducing timely mTORC1 activation. Functionally, suppresses Src-dependent tyrosine phosphorylation and activation of PDPK1 and its downstream signaling. Down-regulates PDPK1 kinase activity by interfering with tyrosine phosphorylation at 'Tyr-9', 'Tyr-373' and 'Tyr-376' residues. May act as a tumor suppressor. Suppresses cell growth and enhances sensitivity to various anticancer drugs. The protein is GATOR1 complex protein NPRL2 of Mus musculus (Mouse).